Here is a 1235-residue protein sequence, read N- to C-terminus: ATP-dependent helicase/nuclease subunit A (1235 aa).

The UvrD-like helicase ATP-binding domain maps to 12–482; that stretch reads SLWTDDQWKA…IDLSQNFRSR (471 aa). 33–40 provides a ligand contact to ATP; that stretch reads AAAGSGKT. A UvrD-like helicase C-terminal domain is found at 509-800; it reads AAELTLGANF…RMMTIHASKG (292 aa).

Belongs to the helicase family. AddA subfamily. In terms of assembly, heterodimer of AddA and AddB/RexB. The cofactor is Mg(2+).

It catalyses the reaction Couples ATP hydrolysis with the unwinding of duplex DNA by translocating in the 3'-5' direction.. It carries out the reaction ATP + H2O = ADP + phosphate + H(+). Functionally, the heterodimer acts as both an ATP-dependent DNA helicase and an ATP-dependent, dual-direction single-stranded exonuclease. Recognizes the chi site generating a DNA molecule suitable for the initiation of homologous recombination. The AddA nuclease domain is required for chi fragment generation; this subunit has the helicase and 3' -&gt; 5' nuclease activities. The sequence is that of ATP-dependent helicase/nuclease subunit A from Listeria monocytogenes serovar 1/2a (strain ATCC BAA-679 / EGD-e).